Here is a 501-residue protein sequence, read N- to C-terminus: ATP synthase subunit alpha (501 aa).

169 to 176 (GDRQTGKT) provides a ligand contact to ATP.

It belongs to the ATPase alpha/beta chains family. As to quaternary structure, F-type ATPases have 2 components, CF(1) - the catalytic core - and CF(0) - the membrane proton channel. CF(1) has five subunits: alpha(3), beta(3), gamma(1), delta(1), epsilon(1). CF(0) has three main subunits: a(1), b(2) and c(9-12). The alpha and beta chains form an alternating ring which encloses part of the gamma chain. CF(1) is attached to CF(0) by a central stalk formed by the gamma and epsilon chains, while a peripheral stalk is formed by the delta and b chains.

It is found in the cell membrane. It carries out the reaction ATP + H2O + 4 H(+)(in) = ADP + phosphate + 5 H(+)(out). Its function is as follows. Produces ATP from ADP in the presence of a proton gradient across the membrane. The alpha chain is a regulatory subunit. This chain is ATP synthase subunit alpha, found in Streptococcus gordonii (strain Challis / ATCC 35105 / BCRC 15272 / CH1 / DL1 / V288).